Reading from the N-terminus, the 602-residue chain is UvrABC system protein C (602 aa).

The GIY-YIG domain maps to 17–94 (KTSGCYKMYS…IKKYKPTYNI (78 aa)). Positions 199–234 (SKLLNDIEIKMKEVIMKENFEAAIKLKETKKSLIEI) constitute a UVR domain.

The protein belongs to the UvrC family. Interacts with UvrB in an incision complex.

It localises to the cytoplasm. In terms of biological role, the UvrABC repair system catalyzes the recognition and processing of DNA lesions. UvrC both incises the 5' and 3' sides of the lesion. The N-terminal half is responsible for the 3' incision and the C-terminal half is responsible for the 5' incision. The polypeptide is UvrABC system protein C (Borrelia duttonii (strain Ly)).